Consider the following 215-residue polypeptide: Pyridoxine/pyridoxamine 5'-phosphate oxidase (215 aa).

Substrate-binding positions include 9-12 and Lys69; that span reads RREY. FMN-binding positions include 64 to 69, 79 to 80, Lys86, and Gln108; these read RILLLK and FT. The substrate site is built by Tyr126, Arg130, and Ser134. Residues 143–144 and Trp188 each bind FMN; that span reads QS. Substrate is bound at residue 194–196; the sequence is RLH. Arg198 contributes to the FMN binding site.

Belongs to the pyridoxamine 5'-phosphate oxidase family. Homodimer. The cofactor is FMN.

It carries out the reaction pyridoxamine 5'-phosphate + O2 + H2O = pyridoxal 5'-phosphate + H2O2 + NH4(+). The catalysed reaction is pyridoxine 5'-phosphate + O2 = pyridoxal 5'-phosphate + H2O2. It participates in cofactor metabolism; pyridoxal 5'-phosphate salvage; pyridoxal 5'-phosphate from pyridoxamine 5'-phosphate: step 1/1. Its pathway is cofactor metabolism; pyridoxal 5'-phosphate salvage; pyridoxal 5'-phosphate from pyridoxine 5'-phosphate: step 1/1. In terms of biological role, catalyzes the oxidation of either pyridoxine 5'-phosphate (PNP) or pyridoxamine 5'-phosphate (PMP) into pyridoxal 5'-phosphate (PLP). This is Pyridoxine/pyridoxamine 5'-phosphate oxidase from Pseudomonas paraeruginosa (strain DSM 24068 / PA7) (Pseudomonas aeruginosa (strain PA7)).